The primary structure comprises 191 residues: Fe/S biogenesis protein NfuA (191 aa).

Residues Cys-149 and Cys-152 each contribute to the [4Fe-4S] cluster site.

This sequence belongs to the NfuA family. As to quaternary structure, homodimer. [4Fe-4S] cluster serves as cofactor.

In terms of biological role, involved in iron-sulfur cluster biogenesis. Binds a 4Fe-4S cluster, can transfer this cluster to apoproteins, and thereby intervenes in the maturation of Fe/S proteins. Could also act as a scaffold/chaperone for damaged Fe/S proteins. The chain is Fe/S biogenesis protein NfuA from Buchnera aphidicola subsp. Baizongia pistaciae (strain Bp).